We begin with the raw amino-acid sequence, 579 residues long: Vitamin B6 transporter TPN1 (579 aa).

Residues methionine 1–alanine 98 are Cytoplasmic-facing. Residues threonine 99 to phenylalanine 119 traverse the membrane as a helical segment. Residues arginine 120 to serine 122 are Extracellular-facing. The chain crosses the membrane as a helical span at residues valine 123 to methionine 143. Over glycine 144–tyrosine 157 the chain is Cytoplasmic. Residues leucine 158 to tryptophan 178 form a helical membrane-spanning segment. At serine 179 to valine 198 the chain is on the extracellular side. The chain crosses the membrane as a helical span at residues proline 199 to isoleucine 219. Residues lysine 220–glutamine 221 are Cytoplasmic-facing. A helical transmembrane segment spans residues valine 222 to isoleucine 242. The Extracellular segment spans residues serine 243–serine 274. The helical transmembrane segment at leucine 275–proline 295 threads the bilayer. Residues glutamate 296 to glutamine 302 are Cytoplasmic-facing. The chain crosses the membrane as a helical span at residues isoleucine 303–leucine 323. The Extracellular segment spans residues leucine 324–cysteine 362. Residues valine 363 to phenylalanine 383 form a helical membrane-spanning segment. Residues serine 384–lysine 394 are Cytoplasmic-facing. A helical membrane pass occupies residues isoleucine 395–glycine 415. Residues arginine 416 to threonine 421 lie on the Extracellular side of the membrane. The chain crosses the membrane as a helical span at residues isoleucine 422–phenylalanine 442. The Cytoplasmic portion of the chain corresponds to glutamate 443–threonine 519. The helical transmembrane segment at phenylalanine 520–glycine 540 threads the bilayer. At proline 541 to lysine 545 the chain is on the extracellular side. A helical membrane pass occupies residues phenylalanine 546–tyrosine 566. The Cytoplasmic segment spans residues proline 567–arginine 579.

The protein belongs to the purine-cytosine permease (2.A.39) family.

The protein resides in the membrane. Its function is as follows. Thiamine-regulated, high affinity import carrier of pyridoxine, pyridoxal and pyridoxamine. The protein is Vitamin B6 transporter TPN1 (TPN1) of Saccharomyces cerevisiae (strain ATCC 204508 / S288c) (Baker's yeast).